The chain runs to 367 residues: Nuclear hormone receptor-like 1 (367 aa).

Positions 32-107 (GQPCVVCGDD…NGMTKSLVLN (76 aa)) form a DNA-binding region, nuclear receptor. 2 consecutive NR C4-type zinc fingers follow at residues 35–55 (CVVC…CEGC) and 71–95 (CKSI…FQKC). An NR LBD domain is found at 145–367 (EFQSRIDQVT…IANILLFKFT (223 aa)).

It belongs to the nuclear hormone receptor family.

It is found in the nucleus. This is Nuclear hormone receptor-like 1 (nhr-1) from Onchocerca volvulus.